A 176-amino-acid polypeptide reads, in one-letter code: MPTNWKDSGLRWYWVVVLVFIADQVSKQWVLTNFELHESVNLLPFFNFTYVRNYGAAFSFLSDAGGWQKWLFTFIAVAFSTILTIWLRKQPTKVWRLNLAYTLVIGGALGNLIDRLQHGYVVDFLDFFWNTSHFAAFNIADSAICIGAGLIILDSFIGDDKEKSQNGQNDNNAAKE.

3 helical membrane-spanning segments follow: residues 12–32 (WYWVVVLVFIADQVSKQWVLT), 67–87 (WQKWLFTFIAVAFSTILTIWL), and 94–114 (VWRLNLAYTLVIGGALGNLID). Catalysis depends on residues Asp123 and Asp141. The chain crosses the membrane as a helical span at residues 133–153 (HFAAFNIADSAICIGAGLIIL).

This sequence belongs to the peptidase A8 family.

It localises to the cell inner membrane. The enzyme catalyses Release of signal peptides from bacterial membrane prolipoproteins. Hydrolyzes -Xaa-Yaa-Zaa-|-(S,diacylglyceryl)Cys-, in which Xaa is hydrophobic (preferably Leu), and Yaa (Ala or Ser) and Zaa (Gly or Ala) have small, neutral side chains.. Its pathway is protein modification; lipoprotein biosynthesis (signal peptide cleavage). In terms of biological role, this protein specifically catalyzes the removal of signal peptides from prolipoproteins. The protein is Lipoprotein signal peptidase of Shewanella sediminis (strain HAW-EB3).